We begin with the raw amino-acid sequence, 422 residues long: MAFIALGINHKTASVAVRERVAFTPEQMVEALQQLCRLTTSREAAILSTCNRSELYLEIDHPTADDVLAWLADYHRLTLDELRACAYVHQDEDAVRHMMRVASGLDSMVLGEPQILGQMKSAYAVAREAGTVGPLLGRLFQATFSTAKTVRTDTAIGENPVSVAFAAVSLAKQIFSDLHRSQALLIGAGETITLVARHLFEQGVKRIVVANRTLERASLLAEQFGAHAVLLSEIPEELANSDIVISSTASQLPILGKGAVERALKQRKHKPMFMVDIAVPRDIEPEVGELDDVYLYSVDDLHEVVAENLKSRQGAAQAAEELVGSGVTEFMQRLRELAAVDVLRAYRQQAERLRDDELGKAQRQLANGADPAEVLAQLARGLTNKLLHAPSVQMKKMSAEGRIDALALAQELFALDEGAPRH.

Substrate is bound by residues 49–52 (TCNR), Ser-107, 112–114 (EPQ), and Gln-118. The active-site Nucleophile is Cys-50. 187–192 (GAGETI) lines the NADP(+) pocket.

Belongs to the glutamyl-tRNA reductase family. As to quaternary structure, homodimer.

It carries out the reaction (S)-4-amino-5-oxopentanoate + tRNA(Glu) + NADP(+) = L-glutamyl-tRNA(Glu) + NADPH + H(+). It functions in the pathway porphyrin-containing compound metabolism; protoporphyrin-IX biosynthesis; 5-aminolevulinate from L-glutamyl-tRNA(Glu): step 1/2. In terms of biological role, catalyzes the NADPH-dependent reduction of glutamyl-tRNA(Glu) to glutamate 1-semialdehyde (GSA). This Pseudomonas paraeruginosa (strain DSM 24068 / PA7) (Pseudomonas aeruginosa (strain PA7)) protein is Glutamyl-tRNA reductase.